Consider the following 204-residue polypeptide: Urease accessory protein UreG (204 aa).

GTP is bound at residue 12-19; the sequence is GPVGSGKT.

Belongs to the SIMIBI class G3E GTPase family. UreG subfamily. In terms of assembly, homodimer. UreD, UreF and UreG form a complex that acts as a GTP-hydrolysis-dependent molecular chaperone, activating the urease apoprotein by helping to assemble the nickel containing metallocenter of UreC. The UreE protein probably delivers the nickel.

It is found in the cytoplasm. In terms of biological role, facilitates the functional incorporation of the urease nickel metallocenter. This process requires GTP hydrolysis, probably effectuated by UreG. This chain is Urease accessory protein UreG, found in Azotobacter vinelandii (strain DJ / ATCC BAA-1303).